Here is a 391-residue protein sequence, read N- to C-terminus: Phosphoglycerate kinase (391 aa).

Substrate is bound by residues 23 to 25 (DFN), arginine 38, 61 to 64 (HLGK), arginine 117, and arginine 150. ATP contacts are provided by residues lysine 201, glycine 291, glutamate 322, and 348–351 (GGDS).

Belongs to the phosphoglycerate kinase family. In terms of assembly, monomer.

The protein resides in the cytoplasm. It catalyses the reaction (2R)-3-phosphoglycerate + ATP = (2R)-3-phospho-glyceroyl phosphate + ADP. It functions in the pathway carbohydrate degradation; glycolysis; pyruvate from D-glyceraldehyde 3-phosphate: step 2/5. The chain is Phosphoglycerate kinase from Clostridium beijerinckii (strain ATCC 51743 / NCIMB 8052) (Clostridium acetobutylicum).